The chain runs to 131 residues: Large ribosomal subunit protein bL12c (131 aa).

The segment covering Lys106–Gly125 has biased composition (basic and acidic residues). A disordered region spans residues Lys106–Lys131.

The protein belongs to the bacterial ribosomal protein bL12 family. Homodimer. Part of the ribosomal stalk of the 50S ribosomal subunit. Forms a multimeric L10(L12)X complex, where L10 forms an elongated spine to which 2 to 4 L12 dimers bind in a sequential fashion. Binds GTP-bound translation factors.

Its subcellular location is the plastid. It is found in the chloroplast. Its function is as follows. Forms part of the ribosomal stalk which helps the ribosome interact with GTP-bound translation factors. Is thus essential for accurate translation. In Gracilaria tenuistipitata var. liui (Red alga), this protein is Large ribosomal subunit protein bL12c.